We begin with the raw amino-acid sequence, 162 residues long: Inorganic pyrophosphatase (162 aa).

Residue glutamate 8 coordinates Mg(2+). Positions 16, 30, and 42 each coordinate substrate. Residues aspartate 52, aspartate 57, aspartate 84, and aspartate 89 each contribute to the Mg(2+) site. The active-site Proton acceptor is the aspartate 89. Residue tyrosine 126 participates in substrate binding.

The protein belongs to the PPase family. In terms of assembly, homohexamer. Requires Mg(2+) as cofactor.

It is found in the cytoplasm. The enzyme catalyses diphosphate + H2O = 2 phosphate + H(+). Catalyzes the hydrolysis of inorganic pyrophosphate (PPi) forming two phosphate ions. The chain is Inorganic pyrophosphatase from Mycobacterium leprae (strain TN).